Here is a 382-residue protein sequence, read N- to C-terminus: Ustilagic acid biosynthesis cluster protein orf2 (382 aa).

A compositionally biased stretch (polar residues) spans 1–20 (MLQEAKVSTHTSNPLSQSVP). Residues 1 to 22 (MLQEAKVSTHTSNPLSQSVPQY) are disordered.

It participates in secondary metabolite biosynthesis. In terms of biological role, part of the gene cluster that mediates the biosynthesis of the glycolipid biosurfactant ustilagic acid (UA). UA is a secreted cellobiose glycolipid that is toxic for many microorganisms and confers biocontrol activity to U.maydis. UA consists of 15,16-dihydroxypalmitic or 2,15,16-trihydroxypalmitic acid, which is O-glycosidically linked to cellobiose at its terminal hydroxyl group. In addition, the cellobiose moiety is acetylated and acylated with a short-chain hydroxy fatty acid. UA biosynthesis starts with omega-hydroxylation of palmitic acid catalyzed by the cytochrome P450 monooxygenase cyp1. Terminal hydroxylation of palmitic acid precedes subterminal hydroxylation catalyzed by the cytochrome P450 monooxygenase cyp2. Sequential glucosylation of the hydroxy fatty acid is probably catalyzed by the glycosyltransferase ugt1. The cellobiose lipid is further decorated by acetylation of the proximal glucose residue and by acylation with a short-chain beta-hydroxy fatty acid at the distal glucose residue. The acyltransferase uat1 may be a good candidate for catalyzing either acetylation or acylation of the cellobiose lipid. The fatty acid synthase fas2 may be involved in synthesis of the carbon backbone of the short-chain beta-hydroxy fatty acid esterified to the cellobiose disaccharide. The secreted UA consists of a mixture of both alpha-hydroxylated and non-hydroxylated glycolipids; therefore, alpha-hydroxylation of the long-chain fatty, catalyzed by the fatty acid hydroxylase ahd1, occurs late in UA biosynthesis and may be the last step before secretion. In Mycosarcoma maydis (Corn smut fungus), this protein is Ustilagic acid biosynthesis cluster protein orf2.